A 432-amino-acid polypeptide reads, in one-letter code: Adenylosuccinate synthetase (432 aa).

GTP is bound by residues 13–19 (GDEGKGK) and 41–43 (GHT). The active-site Proton acceptor is the Asp14. 2 residues coordinate Mg(2+): Asp14 and Gly41. IMP contacts are provided by residues 14–17 (DEGK), 39–42 (NAGH), Thr130, Arg144, Gln225, Thr240, and Arg304. His42 functions as the Proton donor in the catalytic mechanism. 300 to 306 (ATTGRPR) contributes to the substrate binding site. GTP contacts are provided by residues Arg306, 332 to 334 (KLD), and 415 to 417 (STG).

The protein belongs to the adenylosuccinate synthetase family. Homodimer. Mg(2+) is required as a cofactor.

The protein localises to the cytoplasm. It catalyses the reaction IMP + L-aspartate + GTP = N(6)-(1,2-dicarboxyethyl)-AMP + GDP + phosphate + 2 H(+). Its pathway is purine metabolism; AMP biosynthesis via de novo pathway; AMP from IMP: step 1/2. Plays an important role in the de novo pathway of purine nucleotide biosynthesis. Catalyzes the first committed step in the biosynthesis of AMP from IMP. The protein is Adenylosuccinate synthetase of Hahella chejuensis (strain KCTC 2396).